We begin with the raw amino-acid sequence, 295 residues long: MMSWAAARLTETAARCFRARCLGFRVGPWCVSQHENSSYGAAPHRTLRVSAVAFAGHNKWSKVRHIKGPKDMERSRIFSKLTLSIRLAVKEGGPNPENNSSLANILEVCRSKNMPKSTIESALKSEKNKGIYLLYEGRGPGGSSLLIEALSNSGPKCHLEIKYILNKNGGMMTEGARHFFDKKGVVVVGVEDREKKAVNLERALELAIEAGAEDVREAEDEEEEKNLFKFICDASSLHQVRKKLDSLGLCSVSCSLEFIPHSKVQLSEPELEQAVHLIQALSNHEDVIHVYDNIE.

Lys162 carries the N6-acetyllysine modification. A coiled-coil region spans residues Val190–Lys225.

Belongs to the TACO1 family.

The protein localises to the mitochondrion. Acts as a translational activator of mitochondrially-encoded cytochrome c oxidase 1. The polypeptide is Translational activator of cytochrome c oxidase 1 (Rattus norvegicus (Rat)).